Here is a 208-residue protein sequence, read N- to C-terminus: MENSEKLANSKEVIAYIAERFPKCFILEGEAKPLKIGIFQDLAERLSDDPKVSKTQLRAGLRQYTSSWRYLHGVKPGASRVDLDGNPCGELEEEHIEHAKATLEESKAKVATRRKEQAKKAREEAKAKKTARAATPPKRRPQPAAKKVEQPVETRALNADEITVGNNVSVNMGKGNMPATIVEINKDDVRIRLSNGLQMVVKAENLRS.

Basic and acidic residues predominate over residues 106–127; sequence SKAKVATRRKEQAKKAREEAKA. A disordered region spans residues 106–154; sequence SKAKVATRRKEQAKKAREEAKAKKTARAATPPKRRPQPAAKKVEQPVET.

This sequence belongs to the ProQ family.

Its subcellular location is the cytoplasm. Functionally, RNA chaperone with significant RNA binding, RNA strand exchange and RNA duplexing activities. The protein is RNA chaperone ProQ of Aliivibrio fischeri (strain ATCC 700601 / ES114) (Vibrio fischeri).